A 138-amino-acid polypeptide reads, in one-letter code: Ribosome-binding factor A (138 aa).

The tract at residues Asp-119–Asp-138 is disordered.

This sequence belongs to the RbfA family. In terms of assembly, monomer. Binds 30S ribosomal subunits, but not 50S ribosomal subunits or 70S ribosomes.

The protein localises to the cytoplasm. One of several proteins that assist in the late maturation steps of the functional core of the 30S ribosomal subunit. Associates with free 30S ribosomal subunits (but not with 30S subunits that are part of 70S ribosomes or polysomes). Required for efficient processing of 16S rRNA. May interact with the 5'-terminal helix region of 16S rRNA. The polypeptide is Ribosome-binding factor A (Alkaliphilus metalliredigens (strain QYMF)).